A 404-amino-acid chain; its full sequence is MQIGQRLGTPLSPSATRVMLLGAGELGKEVIIALQRLGVEVIAVDRYPNAPGHQVAHRAHVIDMTDPDALRALVDAERPHLVVPEIEAIATDALAAIEAAGVCEVIPTARATQLTMNREGIRRLAAEELGLPTSPYAFAQSFDEFAAAVARIGFPCVVKPVMSSSGKGQSVVRSEADIEPAWRYAMAGGRVNHGRVIVEGFIRFDYEITQLTVRAIDPASGQTRTSFCAPIGHLQVAGDYVESWQPQPMSAKALERARDIAHRVTSALGGRGIFGVELFVRGDDVWFSEVSPRPHDTGLVTLASQRQSEFELHARAILGLPVEPALATPAASAVIYGGLDEAGIAFEGVRDALAVPGADLRLFGKPESFAKRRMGVALATGANVDEARERAKRAAAAVRPVSAR.

N(1)-(5-phospho-beta-D-ribosyl)glycinamide contacts are provided by residues 25 to 26 (EL) and E85. Residues R118, K159, 164-169 (SSGKGQ), 199-202 (EGFI), and E207 contribute to the ATP site. The region spanning 123-318 (RLAAEELGLP…EFELHARAIL (196 aa)) is the ATP-grasp domain. The Mg(2+) site is built by E277 and E289. N(1)-(5-phospho-beta-D-ribosyl)glycinamide contacts are provided by residues D296, K365, and 372–373 (RR).

It belongs to the PurK/PurT family. In terms of assembly, homodimer.

The enzyme catalyses N(1)-(5-phospho-beta-D-ribosyl)glycinamide + formate + ATP = N(2)-formyl-N(1)-(5-phospho-beta-D-ribosyl)glycinamide + ADP + phosphate + H(+). It functions in the pathway purine metabolism; IMP biosynthesis via de novo pathway; N(2)-formyl-N(1)-(5-phospho-D-ribosyl)glycinamide from N(1)-(5-phospho-D-ribosyl)glycinamide (formate route): step 1/1. Functionally, involved in the de novo purine biosynthesis. Catalyzes the transfer of formate to 5-phospho-ribosyl-glycinamide (GAR), producing 5-phospho-ribosyl-N-formylglycinamide (FGAR). Formate is provided by PurU via hydrolysis of 10-formyl-tetrahydrofolate. The polypeptide is Formate-dependent phosphoribosylglycinamide formyltransferase (Burkholderia pseudomallei (strain 668)).